A 132-amino-acid chain; its full sequence is Small ribosomal subunit protein uS8 (132 aa).

Belongs to the universal ribosomal protein uS8 family. In terms of assembly, part of the 30S ribosomal subunit. Contacts proteins S5 and S12.

In terms of biological role, one of the primary rRNA binding proteins, it binds directly to 16S rRNA central domain where it helps coordinate assembly of the platform of the 30S subunit. In Arthrobacter sp. (strain FB24), this protein is Small ribosomal subunit protein uS8.